Reading from the N-terminus, the 293-residue chain is Formamidopyrimidine-DNA glycosylase (293 aa).

Pro-2 serves as the catalytic Schiff-base intermediate with DNA. Glu-3 (proton donor) is an active-site residue. Residue Lys-58 is the Proton donor; for beta-elimination activity of the active site. DNA is bound by residues His-104, Arg-123, and Arg-166. Residues 257 to 293 (AVYDREGEPCRSKGCDGVVKRFVQNGRSTFWCPKCQK) form an FPG-type zinc finger. The active-site Proton donor; for delta-elimination activity is Arg-283.

The protein belongs to the FPG family. As to quaternary structure, monomer. Zn(2+) serves as cofactor.

The enzyme catalyses Hydrolysis of DNA containing ring-opened 7-methylguanine residues, releasing 2,6-diamino-4-hydroxy-5-(N-methyl)formamidopyrimidine.. It catalyses the reaction 2'-deoxyribonucleotide-(2'-deoxyribose 5'-phosphate)-2'-deoxyribonucleotide-DNA = a 3'-end 2'-deoxyribonucleotide-(2,3-dehydro-2,3-deoxyribose 5'-phosphate)-DNA + a 5'-end 5'-phospho-2'-deoxyribonucleoside-DNA + H(+). Its function is as follows. Involved in base excision repair of DNA damaged by oxidation or by mutagenic agents. Acts as a DNA glycosylase that recognizes and removes damaged bases. Has a preference for oxidized purines, such as 7,8-dihydro-8-oxoguanine (8-oxoG). Has AP (apurinic/apyrimidinic) lyase activity and introduces nicks in the DNA strand. Cleaves the DNA backbone by beta-delta elimination to generate a single-strand break at the site of the removed base with both 3'- and 5'-phosphates. This chain is Formamidopyrimidine-DNA glycosylase, found in Rhodopseudomonas palustris (strain BisB18).